The sequence spans 488 residues: Cysteine--tRNA ligase (488 aa).

C28 contacts Zn(2+). The 'HIGH' region motif lies at 30–40 (PTVYDDAHLGH). 3 residues coordinate Zn(2+): C209, H239, and E243. The 'KMSKS' region signature appears at 271 to 275 (KMSKS). K274 contributes to the ATP binding site.

It belongs to the class-I aminoacyl-tRNA synthetase family. Monomer. Zn(2+) is required as a cofactor.

The protein resides in the cytoplasm. It carries out the reaction tRNA(Cys) + L-cysteine + ATP = L-cysteinyl-tRNA(Cys) + AMP + diphosphate. The chain is Cysteine--tRNA ligase from Helicobacter hepaticus (strain ATCC 51449 / 3B1).